We begin with the raw amino-acid sequence, 352 residues long: Ribosomal RNA large subunit methyltransferase M (352 aa).

S-adenosyl-L-methionine-binding positions include serine 184, alanine 217–glycine 220, aspartate 236, aspartate 256, and aspartate 272. Lysine 301 (proton acceptor) is an active-site residue.

This sequence belongs to the class I-like SAM-binding methyltransferase superfamily. RNA methyltransferase RlmE family. RlmM subfamily. Monomer.

It is found in the cytoplasm. The enzyme catalyses cytidine(2498) in 23S rRNA + S-adenosyl-L-methionine = 2'-O-methylcytidine(2498) in 23S rRNA + S-adenosyl-L-homocysteine + H(+). Catalyzes the 2'-O-methylation at nucleotide C2498 in 23S rRNA. The protein is Ribosomal RNA large subunit methyltransferase M of Pseudomonas aeruginosa (strain LESB58).